The primary structure comprises 772 residues: MDALASEEYASQSKLLQEFTNAPSIDGAWVFQTNNEDRSTAMYSISQTNLLANNKRKYILFSHIMRNGTNLLDFQWSPFPIQMDGVSAVVPSPSGSKLLVVRNGEKGSPTKLEIVDQSHVEKEIHVAQSVHGPLYTDEWFHGISWNQEETLIAYIAEDSPEPKPVFDDTGYRKEGSSEKDCNNWKGQGDWEEDWGETYSKKGRPSLFVLDINSGEVRAAKGISRSLSVGQVVWAPPSSCGRQKYLIFVGWLEHNGFQNTPRKLGIKYCSNRPCSLYSTLCPFEESDVDNAPASDSKLEPASVAINLTPSISSAFFPRFSKDGKLLVFLSANRAVDSGAHNATDSLHKINWPSDWKMDQYLEITDVIPIVMCPQDGCFPGLYCSSMLSNPWLSDRCTMILTSAWRSTEVILSIDVLSGKATRISPENSEYSWSALAVDGHNVLAVSSSPIDPPQIKYGHQVSLKDQTCTWVWDEVNNNPLMAANNKVKALLSHHQFSILKIPVTNPSDDLSDGSKLPFEAIFVSCKDSSHKPTILVLHGGPHSVSVSSYSKTSAFLASLGFNLLIVNYRGTPGFGEEALQSLPGKVGSQDVQDCLTALDYVIEGGLIDASKVAVIGISHGGFLTTHLIGQAPDRFMVAAARNPVCNLSLMIGTTDIPDWCYAVACGSEGRQHASESPSPDHLRLFYQKSPIAHISKVKAPLLMLLGGADLRVPISNGLQYARALRERGGEIRIMMFPDDIHEINIPQSDFESFLNIGVWFKKHLSISASDASA.

Active-site charge relay system residues include serine 617, aspartate 708, and histidine 740.

It belongs to the peptidase S9C family. As to quaternary structure, homotetramer.

The protein resides in the cytoplasm. The enzyme catalyses Cleavage of an N-acetyl or N-formyl amino acid from the N-terminus of a polypeptide.. Functionally, catalyzes the hydrolysis of the N-terminal peptide bond of an N-acetylated peptide to generate an N-acetylated amino acid and a peptide with a free N-terminus. The sequence is that of Acylamino-acid-releasing enzyme 2 from Oryza sativa subsp. japonica (Rice).